We begin with the raw amino-acid sequence, 362 residues long: Cyclic di-GMP phosphodiesterase PdeL (362 aa).

One can recognise an HTH luxR-type domain in the interval 18-83 (HLSLPGSVSE…TFWRDIFFQY (66 aa)). The segment at residues 42–61 (VTEISQYRNRSAKTISHQKK) is a DNA-binding region (H-T-H motif). Residues 106-360 (HIVTPEAISL…KFISEWVMKA (255 aa)) form the EAL domain. Gln-127 contributes to the substrate binding site. Residue Glu-141 participates in Mg(2+) binding. Substrate is bound by residues 144–145 (VR) and Asn-200. Mg(2+) is bound by residues Asn-200, Glu-232, and Asp-262. Substrate is bound by residues Asp-262, Lys-286, 319–322 (EGVE), and Tyr-341.

In terms of assembly, is in a fast thermodynamic monomer-homodimer equilibrium. Dimerization is required for PDE activity. Dimerization affinity is increased about 100-fold upon substrate binding. It depends on Mg(2+) as a cofactor. The cofactor is Mn(2+).

The catalysed reaction is 3',3'-c-di-GMP + H2O = 5'-phosphoguanylyl(3'-&gt;5')guanosine + H(+). Its activity is regulated as follows. Strongly inhibited by Ca(2+). Functionally, acts both as an enzyme and as a c-di-GMP sensor to couple transcriptional activity to the c-di-GMP status of the cell. Phosphodiesterase (PDE) that catalyzes the hydrolysis of cyclic-di-GMP (c-di-GMP) to 5'-pGpG. Also acts as a transcription factor to control its own expression. The sequence is that of Cyclic di-GMP phosphodiesterase PdeL from Escherichia coli (strain K12).